Here is a 108-residue protein sequence, read N- to C-terminus: MIISTTTAIEGRPVQGYLGVVTGEAILGANVFADFFAKIRDIVGGRSAAYERELRKARQIAMDEMTREARELGADGVIGVDIDYETIAVPEGGSMLMVSVSGTAVKLS.

Belongs to the UPF0145 family.

This chain is UPF0145 protein gll1048, found in Gloeobacter violaceus (strain ATCC 29082 / PCC 7421).